Consider the following 831-residue polypeptide: Phosphoinositide phosphatase SAC4 (831 aa).

The region spanning 162-551 (LCMVDLTKDF…GDTLAYQYGG (390 aa)) is the SAC domain. A disordered region spans residues 439–475 (SDADTSPHNSSDDDSRDYDSLEKNCRPSKNVANGDYD). The segment covering 448–463 (SSDDDSRDYDSLEKNC) has biased composition (basic and acidic residues). A Phosphatase catalytic core motif is present at residues 487–498 (RTNCIDCLDRTN). Positions 785–805 (PAMRESGSSSRKGKEPVETEL) are disordered. Basic and acidic residues predominate over residues 796-805 (KGKEPVETEL).

In terms of assembly, component of the PI(3,5)P2 regulatory complex at least composed of ATG18, SAC/FIG4, FAB1 and VAC14. Mg(2+) is required as a cofactor. Ubiquitous with a higher level of expression in young seedlings than in other tissues.

The protein resides in the vacuole membrane. It carries out the reaction a 1,2-diacyl-sn-glycero-3-phospho-(1D-myo-inositol-3,5-bisphosphate) + H2O = a 1,2-diacyl-sn-glycero-3-phospho-(1D-myo-inositol-3-phosphate) + phosphate. In terms of biological role, the PI(3,5)P2 regulatory complex regulates both the synthesis and turnover of phosphatidylinositol 3,5-bisphosphate (PtdIns(3,5)P2). The sequence is that of Phosphoinositide phosphatase SAC4 (SAC4) from Arabidopsis thaliana (Mouse-ear cress).